The sequence spans 241 residues: Diacetyl reductase [(S)-acetoin forming] (241 aa).

Position 6–30 (6–30 (LVTGAGQGIGKAIALRLVKDGFAVA)) interacts with NAD(+). Residue Ser-139 coordinates substrate. The active-site Proton acceptor is the Tyr-152. Lys-156 is an active-site residue.

It belongs to the short-chain dehydrogenases/reductases (SDR) family. Homotetramer.

It carries out the reaction (S)-acetoin + NAD(+) = diacetyl + NADH + H(+). Functionally, catalyzes the irreversible reduction of 2,3-butanediol to (S)-acetoin in the presence of NADH. The protein is Diacetyl reductase [(S)-acetoin forming] (budC) of Raoultella terrigena (Klebsiella terrigena).